A 104-amino-acid polypeptide reads, in one-letter code: Large ribosomal subunit protein uL24 (104 aa).

This sequence belongs to the universal ribosomal protein uL24 family. As to quaternary structure, part of the 50S ribosomal subunit.

In terms of biological role, one of two assembly initiator proteins, it binds directly to the 5'-end of the 23S rRNA, where it nucleates assembly of the 50S subunit. One of the proteins that surrounds the polypeptide exit tunnel on the outside of the subunit. This Shewanella oneidensis (strain ATCC 700550 / JCM 31522 / CIP 106686 / LMG 19005 / NCIMB 14063 / MR-1) protein is Large ribosomal subunit protein uL24.